We begin with the raw amino-acid sequence, 353 residues long: Photosystem II D2 protein (353 aa).

Thr-2 is subject to N-acetylthreonine. At Thr-2 the chain carries Phosphothreonine. Residues 41–61 (CAYFAVGGWFTGTTFVTSWYT) traverse the membrane as a helical segment. His-118 contacts chlorophyll a. A helical membrane pass occupies residues 125-141 (GFMLRQFELARSVQLRP). Residues Gln-130 and Asn-143 each coordinate pheophytin a. The chain crosses the membrane as a helical span at residues 153–166 (VFVSVFLIYPLGQS). His-198 contributes to the chlorophyll a binding site. Residues 208 to 228 (AALLCAIHGATVENTLFEDGD) traverse the membrane as a helical segment. Positions 215 and 262 each coordinate a plastoquinone. His-215 is a binding site for Fe cation. His-269 provides a ligand contact to Fe cation. Residues 279 to 295 (GLWMSALGVVGLALNLR) traverse the membrane as a helical segment.

The protein belongs to the reaction center PufL/M/PsbA/D family. PSII is composed of 1 copy each of membrane proteins PsbA, PsbB, PsbC, PsbD, PsbE, PsbF, PsbH, PsbI, PsbJ, PsbK, PsbL, PsbM, PsbT, PsbX, PsbY, PsbZ, Psb30/Ycf12, at least 3 peripheral proteins of the oxygen-evolving complex and a large number of cofactors. It forms dimeric complexes. Requires The D1/D2 heterodimer binds P680, chlorophylls that are the primary electron donor of PSII, and subsequent electron acceptors. It shares a non-heme iron and each subunit binds pheophytin, quinone, additional chlorophylls, carotenoids and lipids. There is also a Cl(-1) ion associated with D1 and D2, which is required for oxygen evolution. The PSII complex binds additional chlorophylls, carotenoids and specific lipids. as cofactor.

It is found in the plastid. The protein localises to the chloroplast thylakoid membrane. The enzyme catalyses 2 a plastoquinone + 4 hnu + 2 H2O = 2 a plastoquinol + O2. Photosystem II (PSII) is a light-driven water:plastoquinone oxidoreductase that uses light energy to abstract electrons from H(2)O, generating O(2) and a proton gradient subsequently used for ATP formation. It consists of a core antenna complex that captures photons, and an electron transfer chain that converts photonic excitation into a charge separation. The D1/D2 (PsbA/PsbD) reaction center heterodimer binds P680, the primary electron donor of PSII as well as several subsequent electron acceptors. D2 is needed for assembly of a stable PSII complex. In Lactuca sativa (Garden lettuce), this protein is Photosystem II D2 protein.